Reading from the N-terminus, the 948-residue chain is MAQQYQPGQRWISDSEAELGLGTVLAQDGRLLTVLYPATGETRQYALRNAPLTRVRFSPGDVITHFENWKMTVREVDDVDGLLVYHGLNAQNEVVTLPETQLSNFIQFRLATDRLFAGQIDQLSWFSLRYNTLEHTSRQLQSSLWGLGGVRAQPIAHQLHIAREVADRIAPRVLLADEVGLGKTIEAGLVIHRQLLSGRASRVLILVPENLQHQWLVEMRRRFNLQVALFDAERFMESDAGNPFEDTQLALVALEWLVEDEKAQDALFAAGWDLMVVDEAHHLVWHEDKASREYSLVEQLAEVIAGVLLLTATPEQLGQDSHFARLRLLDPNRFHDLKAFRAESENYRPVAQAVQELLDKGKLSAEAQETIHGFLGAEGDSLLAAVNTGDDEAKARLIRELLDRHGTGRVLFRNTRAAVQGFPERKLHQYPLPCPVEYLELPVGEHADLYPEVSFQSQPEVSEEERWWRFDPRVDWLIDTLKMLKRVKVLVICAHAETAMDLEDALRVRSGIPATVFHEGMNILERDRAAAYFADEEFGAQVLICSEIGSEGRNFQFSHHLVLFDLPSHPDLLEQRIGRLDRIGQKHTIELHVPFLETSPQARLFQWYHEALNAFLNTCPTGNALQHQFGPRLLPLLESGDDDEWQSLIDEARTERERLESELHTGRDRLLELNSGGAGEGEALVEAILEQDDQFSLPIYMETLFDAFGIDSEDHSENALILKPSEKMLDASFPLGDDEGVTITYDRNQALSREDMQFITWEHPMVQGGMDLVRSGSMGNTAVALIKNKALKPGTVLLELIYVSEVVAPRSLQLGRYLPPAALRCLLDANGNDLSSRVSFNTLNDQLESVPRASANKFIQAQRDQLTPRINAGEEKITPRHAERVAEAQRRLAADTEEELARLTALQAVNPTVRDSELVALRSQREQGLAMLEKAALRLEAIRVLVAG.

A Helicase ATP-binding domain is found at 164–332; it reads EVADRIAPRV…FARLRLLDPN (169 aa). 177–184 is an ATP binding site; that stretch reads DEVGLGKT. The DEAH box signature appears at 278-281; that stretch reads DEAH. Positions 473-627 constitute a Helicase C-terminal domain; that stretch reads RVDWLIDTLK…TCPTGNALQH (155 aa).

The protein belongs to the SNF2/RAD54 helicase family. RapA subfamily. In terms of assembly, interacts with the RNAP. Has a higher affinity for the core RNAP than for the holoenzyme. Its ATPase activity is stimulated by binding to RNAP.

Transcription regulator that activates transcription by stimulating RNA polymerase (RNAP) recycling in case of stress conditions such as supercoiled DNA or high salt concentrations. Probably acts by releasing the RNAP, when it is trapped or immobilized on tightly supercoiled DNA. Does not activate transcription on linear DNA. Probably not involved in DNA repair. The chain is RNA polymerase-associated protein RapA from Pseudomonas savastanoi pv. phaseolicola (strain 1448A / Race 6) (Pseudomonas syringae pv. phaseolicola (strain 1448A / Race 6)).